A 93-amino-acid chain; its full sequence is UPF0457 protein GTNG_2792 (93 aa).

This sequence belongs to the UPF0457 family.

This is UPF0457 protein GTNG_2792 from Geobacillus thermodenitrificans (strain NG80-2).